A 333-amino-acid chain; its full sequence is Glycerol-3-phosphate dehydrogenase [NAD(P)+] (333 aa).

Ser-10, Trp-11, His-31, Arg-32, and Lys-105 together coordinate NADPH. Sn-glycerol 3-phosphate contacts are provided by Lys-105, Gly-136, and Ser-138. Ala-140 is an NADPH binding site. Sn-glycerol 3-phosphate-binding residues include Lys-191, Asp-244, Ser-254, Arg-255, and Asn-256. Lys-191 (proton acceptor) is an active-site residue. Arg-255 is an NADPH binding site. Residues Ile-279 and Glu-281 each coordinate NADPH.

The protein belongs to the NAD-dependent glycerol-3-phosphate dehydrogenase family.

It localises to the cytoplasm. It catalyses the reaction sn-glycerol 3-phosphate + NAD(+) = dihydroxyacetone phosphate + NADH + H(+). The enzyme catalyses sn-glycerol 3-phosphate + NADP(+) = dihydroxyacetone phosphate + NADPH + H(+). It functions in the pathway membrane lipid metabolism; glycerophospholipid metabolism. Functionally, catalyzes the reduction of the glycolytic intermediate dihydroxyacetone phosphate (DHAP) to sn-glycerol 3-phosphate (G3P), the key precursor for phospholipid synthesis. The sequence is that of Glycerol-3-phosphate dehydrogenase [NAD(P)+] from Chlorobium luteolum (strain DSM 273 / BCRC 81028 / 2530) (Pelodictyon luteolum).